The following is a 178-amino-acid chain: Crossover junction endodeoxyribonuclease RuvC (178 aa).

Residues Asp-21, Glu-81, and His-154 contribute to the active site. Mg(2+) is bound by residues Asp-21, Glu-81, and His-154.

This sequence belongs to the RuvC family. Homodimer which binds Holliday junction (HJ) DNA. The HJ becomes 2-fold symmetrical on binding to RuvC with unstacked arms; it has a different conformation from HJ DNA in complex with RuvA. In the full resolvosome a probable DNA-RuvA(4)-RuvB(12)-RuvC(2) complex forms which resolves the HJ. Mg(2+) serves as cofactor.

It is found in the cytoplasm. It catalyses the reaction Endonucleolytic cleavage at a junction such as a reciprocal single-stranded crossover between two homologous DNA duplexes (Holliday junction).. The RuvA-RuvB-RuvC complex processes Holliday junction (HJ) DNA during genetic recombination and DNA repair. Endonuclease that resolves HJ intermediates. Cleaves cruciform DNA by making single-stranded nicks across the HJ at symmetrical positions within the homologous arms, yielding a 5'-phosphate and a 3'-hydroxyl group; requires a central core of homology in the junction. The consensus cleavage sequence is 5'-(A/T)TT(C/G)-3'. Cleavage occurs on the 3'-side of the TT dinucleotide at the point of strand exchange. HJ branch migration catalyzed by RuvA-RuvB allows RuvC to scan DNA until it finds its consensus sequence, where it cleaves and resolves the cruciform DNA. The chain is Crossover junction endodeoxyribonuclease RuvC from Treponema denticola (strain ATCC 35405 / DSM 14222 / CIP 103919 / JCM 8153 / KCTC 15104).